Here is an 88-residue protein sequence, read N- to C-terminus: MAHKKGASSSSNGRDSEAKRLGVKRFGGQQVSAGEILVRQRGTKFHPGENVGRGGDDTLFALKTGAVQFSTKRNRRLVNIVETEAVDA.

A disordered region spans residues Met-1–Phe-26.

This sequence belongs to the bacterial ribosomal protein bL27 family.

The protein is Large ribosomal subunit protein bL27 of Corynebacterium glutamicum (strain R).